We begin with the raw amino-acid sequence, 263 residues long: L-histidine 2-aminobutanoyltransferase (263 aa).

The protein belongs to the methyltransferase superfamily. CntL family.

It catalyses the reaction L-histidine + S-adenosyl-L-methionine = (2S)-2-amino-4-{[(1S)-1-carboxy-2-(1H-imidazol-4-yl)ethyl]amino}butanoate + S-methyl-5'-thioadenosine + H(+). Functionally, catalyzes the nucleophilic attack of one alpha-aminobutanoate moiety from SAM onto L-histidine to produce the intermediate (2S)-2-amino-4-{[(1S)-1-carboxy-2-(1H-imidazol-4-yl)ethyl]amino}butanoate. Functions in the biosynthesis of the metallophore pseudopaline, which is involved in the acquisition of nickel and zinc, and thus enables bacterial growth inside the host, where metal access is limited. Therefore, this enzyme probably contributes to Pseudomonas virulence. Appears to be specific for L-histidine as substrate. The protein is L-histidine 2-aminobutanoyltransferase of Pseudomonas aeruginosa (strain ATCC 15692 / DSM 22644 / CIP 104116 / JCM 14847 / LMG 12228 / 1C / PRS 101 / PAO1).